Reading from the N-terminus, the 172-residue chain is 3-phenylpropionate/cinnamic acid dioxygenase subunit beta (172 aa).

Belongs to the bacterial ring-hydroxylating dioxygenase beta subunit family. This dioxygenase system consists of four proteins: the two subunits of the hydroxylase component (HcaE and HcaF), a ferredoxin (HcaC) and a ferredoxin reductase (HcaD).

It carries out the reaction 3-phenylpropanoate + NADH + O2 + H(+) = 3-(cis-5,6-dihydroxycyclohexa-1,3-dien-1-yl)propanoate + NAD(+). It catalyses the reaction (E)-cinnamate + NADH + O2 + H(+) = (2E)-3-(cis-5,6-dihydroxycyclohexa-1,3-dien-1-yl)prop-2-enoate + NAD(+). It functions in the pathway aromatic compound metabolism; 3-phenylpropanoate degradation. In terms of biological role, part of the multicomponent 3-phenylpropionate dioxygenase. Converts 3-phenylpropionic acid (PP) and cinnamic acid (CI) into 3-phenylpropionate-dihydrodiol (PP-dihydrodiol) and cinnamic acid-dihydrodiol (CI-dihydrodiol), respectively. This Shigella flexneri serotype 5b (strain 8401) protein is 3-phenylpropionate/cinnamic acid dioxygenase subunit beta.